A 223-amino-acid polypeptide reads, in one-letter code: Deoxyribose-phosphate aldolase (223 aa).

Residue D89 is the Proton donor/acceptor of the active site. K152 (schiff-base intermediate with acetaldehyde) is an active-site residue. Residue K181 is the Proton donor/acceptor of the active site.

The protein belongs to the DeoC/FbaB aldolase family. DeoC type 1 subfamily.

Its subcellular location is the cytoplasm. The enzyme catalyses 2-deoxy-D-ribose 5-phosphate = D-glyceraldehyde 3-phosphate + acetaldehyde. Its pathway is carbohydrate degradation; 2-deoxy-D-ribose 1-phosphate degradation; D-glyceraldehyde 3-phosphate and acetaldehyde from 2-deoxy-alpha-D-ribose 1-phosphate: step 2/2. Functionally, catalyzes a reversible aldol reaction between acetaldehyde and D-glyceraldehyde 3-phosphate to generate 2-deoxy-D-ribose 5-phosphate. This is Deoxyribose-phosphate aldolase from Bacillus cereus (strain Q1).